The primary structure comprises 109 residues: U4-lycotoxin-Ls1a (109 aa).

Residues 1–22 (MKVLVLFSVLFLTLFSYSSTEA) form the signal peptide. A propeptide spanning residues 23 to 44 (IDEFDSDAEEDMLSLMANEQVR) is cleaved from the precursor. Positions 45-88 (AKACTPRLHDCSHDRHSCCRGELFKDVCYCFYPEGEDKTEVCSC) are knottin domain. Disulfide bonds link Cys48-Cys63, Cys55-Cys72, Cys62-Cys88, and Cys74-Cys86. Positions 89–108 (QQPKSHKYIEKVVDKAKTVV) are linear cationic cytotoxin domain.

Belongs to the neurotoxin 19 (CSTX) family. 05 (U4-Lctx) subfamily. As to expression, expressed by the venom gland.

The protein localises to the secreted. Enhances the high-affinity desensitization of human P2RX3 purinoceptors. The chain is U4-lycotoxin-Ls1a from Lycosa singoriensis (Wolf spider).